The primary structure comprises 451 residues: Phosphoglucosamine mutase (451 aa).

Ser-102 acts as the Phosphoserine intermediate in catalysis. The Mg(2+) site is built by Ser-102, Asp-243, Asp-245, and Asp-247. Ser-102 bears the Phosphoserine mark.

This sequence belongs to the phosphohexose mutase family. Mg(2+) serves as cofactor. Post-translationally, activated by phosphorylation.

It carries out the reaction alpha-D-glucosamine 1-phosphate = D-glucosamine 6-phosphate. Catalyzes the conversion of glucosamine-6-phosphate to glucosamine-1-phosphate. This is Phosphoglucosamine mutase from Salinispora arenicola (strain CNS-205).